The sequence spans 938 residues: MNDYKNTLNLPKTQFSMRANLSQKEPKILKNWYDNNLYKLIRQKKEGKKIFFLHDGPPYANGNIHIGHAVNKILKDIIIKSKNMSGFDAPYIPSWDCHGLPIEQKVEEQMGLKSNNIITTIFQKKCRKYAEKQIKKQKKDFIRLGVIGDWENAHLTMDFKNEANIIKTLSKIIEKKYLYKESKPIHWCLKCYSSLSDAEIEHFDKESDSIFVAIKSKNNKILKEVLNLNISSEKDIYLPIWTTTPWTLPSSQAITVNPIFEYQIIETKKYNLILAKELVKNVMKILEINHWNILSSFKGKILEGKKFLHPFLENISLPVILGDHVNLDSGTGAVHTAPDHGPDDYIVSQKYKIKTMNLVDFKGNYINNIHPKLNGVNIFQANEIIINLLIKKDCLLHHNILKHSYPHCWRHKTPVIFRATEQWFINIDQKKLRYKTLEEIKKVSWIPKWGGSRIEEMIKKRPDWCVSRQRKWGVPMCLFLHKKTGKIHPENTLLIKKIIKKVELEGIEAWWKINLKEMLGETYNMYNQTFDILDVWFESGNTHTVIKYKNKKYSKNHADMFLEGSDQHRGWFMSSLIISMLVKNQSPYSEVLTHGFVVDKNGQKMSKSIGNTISPNEVVKTLGGDILRLWVASSNYSNDISISNEILKRSSDIYRRIRNTARFMLANINDFNPQKNTVLKENMVLLDRWAISQAKIVQEEIIEFYKKYNFHAIIKRLMYFCSIEMGSFYLDIIKDRQYTLKTNSQERRSCQTAIYYIINALVRWIAPILSFTADEIWNHLPGKHAQYVFTEEWFNKLFDLDKNDLFNREFWKNLIEMKNEINKFLETEIKNKNINNSLEACLILYVTPEVKKTLNILGEELKFIFLTSKVKIELYNTAPINSTKSKKISNFKIFLKKIKEKKCPRCWHYNIFIENNNDKICTRCILNTKGNGEKRFFI.

A 'HIGH' region motif is present at residues 58–68 (PYANGNIHIGH). An L-isoleucyl-5'-AMP-binding site is contributed by Glu-563. The 'KMSKS' region motif lies at 604–608 (KMSKS). Lys-607 contributes to the ATP binding site. Zn(2+)-binding residues include Cys-903, Cys-906, Cys-921, and Cys-924.

Belongs to the class-I aminoacyl-tRNA synthetase family. IleS type 1 subfamily. In terms of assembly, monomer. The cofactor is Zn(2+).

It localises to the cytoplasm. It carries out the reaction tRNA(Ile) + L-isoleucine + ATP = L-isoleucyl-tRNA(Ile) + AMP + diphosphate. Its function is as follows. Catalyzes the attachment of isoleucine to tRNA(Ile). As IleRS can inadvertently accommodate and process structurally similar amino acids such as valine, to avoid such errors it has two additional distinct tRNA(Ile)-dependent editing activities. One activity is designated as 'pretransfer' editing and involves the hydrolysis of activated Val-AMP. The other activity is designated 'posttransfer' editing and involves deacylation of mischarged Val-tRNA(Ile). In Buchnera aphidicola subsp. Schizaphis graminum (strain Sg), this protein is Isoleucine--tRNA ligase.